The sequence spans 44 residues: MAASGGTKKAQSGGRRLREPSSRPSRRARQRPRRGALRKAGRFL.

The interval 1 to 44 is disordered; the sequence is MAASGGTKKAQSGGRRLREPSSRPSRRARQRPRRGALRKAGRFL. Over residues 24-44 the composition is skewed to basic residues; the sequence is PSRRARQRPRRGALRKAGRFL.

Interacts with KLHL15; preventing ubiquitination and degradation of RBBP8/CtIP. Interacts with PARP1.

It localises to the nucleus. The protein resides in the nucleolus. Its subcellular location is the chromosome. Its function is as follows. Micropeptide that acts as a regulator of DNA repair both by preventing KLHL15-mediated ubiquitination and degradation of RBBP8/CtIP, and by promoting the poly-ADP-ribosyltransferase activity of PARP1. Prevents KLHL15-mediated ubiquitination of RBBP8/CtIP by competitively blocking the association between KLHL15 and RBBP8/CtIP. Recruited to DNA damage sites via association with poly-ADP-ribose chains, and enhances the poly-ADP-ribosyltransferase activity of PARP1. In Homo sapiens (Human), this protein is Poly-ADP-ribosylation-amplifying and CtIP-maintaining micropeptide.